The chain runs to 347 residues: MSVMFDPDTAIYPFPTKPTPLSIDEKAYYREKIKRLLKERNAVMVAHYYTDPEIQQLAEETGGCISDSLEMARFGAKHPASTLLVAGVRFMGETAKILSPEKTILMPTLQAECSLDLGCPVDQFNAFCDAHPDRTVVVYANTSAVVKARADWVVTSSIAVELIDHLDSLGEKIIWAPDKHLGRYVQKQTGADILCWQGTCIVHDEFKTQALTRLQKQYPDAAILVHPESPQAIVDMADAVGSTSQLIAAAKTLPHQRLIVATDRGIFYKMQQAVPDKELLEAPTAGEGATCRSCAHCPWMAMNGLQAIAEALEQEESNYEVHVDERLRERALVPLNRMLDFAATLRG.

Iminosuccinate-binding residues include His47 and Ser68. Cys113 is a [4Fe-4S] cluster binding site. Residues 139–141 and Ser156 contribute to the iminosuccinate site; that span reads YAN. Residue Cys200 coordinates [4Fe-4S] cluster. Iminosuccinate contacts are provided by residues 226 to 228 and Thr243; that span reads HPE. Residue Cys297 coordinates [4Fe-4S] cluster.

It belongs to the quinolinate synthase family. Type 1 subfamily. [4Fe-4S] cluster is required as a cofactor.

The protein resides in the cytoplasm. The catalysed reaction is iminosuccinate + dihydroxyacetone phosphate = quinolinate + phosphate + 2 H2O + H(+). The protein operates within cofactor biosynthesis; NAD(+) biosynthesis; quinolinate from iminoaspartate: step 1/1. Catalyzes the condensation of iminoaspartate with dihydroxyacetone phosphate to form quinolinate. This is Quinolinate synthase from Escherichia fergusonii (strain ATCC 35469 / DSM 13698 / CCUG 18766 / IAM 14443 / JCM 21226 / LMG 7866 / NBRC 102419 / NCTC 12128 / CDC 0568-73).